A 155-amino-acid polypeptide reads, in one-letter code: Interleukin-2 (155 aa).

The signal sequence occupies residues 1-20 (MYRMQLLSCIALTLALVANG). O-linked (GalNAc...) threonine glycosylation is present at threonine 23. Residues cysteine 79 and cysteine 127 are joined by a disulfide bond.

The protein belongs to the IL-2 family.

It localises to the secreted. In terms of biological role, cytokine produced by activated CD4-positive helper T-cells and to a lesser extend activated CD8-positive T-cells and natural killer (NK) cells that plays pivotal roles in the immune response and tolerance. Binds to a receptor complex composed of either the high-affinity trimeric IL-2R (IL2RA/CD25, IL2RB/CD122 and IL2RG/CD132) or the low-affinity dimeric IL-2R (IL2RB and IL2RG). Interaction with the receptor leads to oligomerization and conformation changes in the IL-2R subunits resulting in downstream signaling starting with phosphorylation of JAK1 and JAK3. In turn, JAK1 and JAK3 phosphorylate the receptor to form a docking site leading to the phosphorylation of several substrates including STAT5. This process leads to activation of several pathways including STAT, phosphoinositide-3-kinase/PI3K and mitogen-activated protein kinase/MAPK pathways. Functions as a T-cell growth factor and can increase NK-cell cytolytic activity as well. Promotes strong proliferation of activated B-cells and subsequently immunoglobulin production. Plays a pivotal role in regulating the adaptive immune system by controlling the survival and proliferation of regulatory T-cells, which are required for the maintenance of immune tolerance. Moreover, participates in the differentiation and homeostasis of effector T-cell subsets, including Th1, Th2, Th17 as well as memory CD8-positive T-cells. The protein is Interleukin-2 (IL2) of Capra hircus (Goat).